Here is a 152-residue protein sequence, read N- to C-terminus: UPF0225 protein YchJ (152 aa).

The protein belongs to the UPF0225 family.

The chain is UPF0225 protein YchJ from Shigella flexneri serotype 5b (strain 8401).